We begin with the raw amino-acid sequence, 244 residues long: Methylthioribulose-1-phosphate dehydratase (244 aa).

Cys-89 contacts substrate. 2 residues coordinate Zn(2+): His-107 and His-109. The active-site Proton donor/acceptor is Glu-130. His-192 contributes to the Zn(2+) binding site.

It belongs to the aldolase class II family. MtnB subfamily. The cofactor is Zn(2+).

Its subcellular location is the cytoplasm. It carries out the reaction 5-(methylsulfanyl)-D-ribulose 1-phosphate = 5-methylsulfanyl-2,3-dioxopentyl phosphate + H2O. Its pathway is amino-acid biosynthesis; L-methionine biosynthesis via salvage pathway; L-methionine from S-methyl-5-thio-alpha-D-ribose 1-phosphate: step 2/6. Catalyzes the dehydration of methylthioribulose-1-phosphate (MTRu-1-P) into 2,3-diketo-5-methylthiopentyl-1-phosphate (DK-MTP-1-P). The sequence is that of Methylthioribulose-1-phosphate dehydratase from Saccharomyces cerevisiae (strain ATCC 204508 / S288c) (Baker's yeast).